The following is a 344-amino-acid chain: N-acetyl-gamma-glutamyl-phosphate reductase (344 aa).

C149 is a catalytic residue.

Belongs to the NAGSA dehydrogenase family. Type 1 subfamily.

It is found in the cytoplasm. It carries out the reaction N-acetyl-L-glutamate 5-semialdehyde + phosphate + NADP(+) = N-acetyl-L-glutamyl 5-phosphate + NADPH + H(+). It functions in the pathway amino-acid biosynthesis; L-arginine biosynthesis; N(2)-acetyl-L-ornithine from L-glutamate: step 3/4. Its function is as follows. Catalyzes the NADPH-dependent reduction of N-acetyl-5-glutamyl phosphate to yield N-acetyl-L-glutamate 5-semialdehyde. In Syntrophobacter fumaroxidans (strain DSM 10017 / MPOB), this protein is N-acetyl-gamma-glutamyl-phosphate reductase.